The chain runs to 1206 residues: DNA polymerase beta (1206 aa).

4 consecutive repeat copies span residues 1071–1074 (AGNP), 1075–1078 (AGNP), 1079–1082 (AGNP), and 1083–1086 (AGNA). Residues 1071–1086 (AGNPAGNPAGNPAGNA) form a 4 X 4 AA tandem repeats of A-G-[NK]-[PA] region.

This sequence belongs to the DNA polymerase type-B family.

It carries out the reaction DNA(n) + a 2'-deoxyribonucleoside 5'-triphosphate = DNA(n+1) + diphosphate. In terms of biological role, DNA-directed DNA polymerase involved in viral DNA replication. The chain is DNA polymerase beta from Ornithodoros (relapsing fever ticks).